We begin with the raw amino-acid sequence, 552 residues long: Phosphoglucomutase (552 aa).

The active-site Phosphoserine intermediate is serine 135. Mg(2+)-binding residues include serine 135, aspartate 289, aspartate 291, and aspartate 293.

The protein belongs to the phosphohexose mutase family. The cofactor is Mg(2+).

The catalysed reaction is alpha-D-glucose 1-phosphate = alpha-D-glucose 6-phosphate. It functions in the pathway glycolipid metabolism; diglucosyl-diacylglycerol biosynthesis. Catalyzes the interconversion between glucose-6-phosphate and alpha-glucose-1-phosphate. This is the first step in the biosynthesis of diglucosyl-diacylglycerol (Glc2-DAG), i.e. a glycolipid found in the membrane, which is also used as a membrane anchor for lipoteichoic acid (LTA). The protein is Phosphoglucomutase (pgcA) of Staphylococcus saprophyticus subsp. saprophyticus (strain ATCC 15305 / DSM 20229 / NCIMB 8711 / NCTC 7292 / S-41).